The primary structure comprises 95 residues: Orphan antitoxin ParD2 (95 aa).

Functionally, antitoxin component of a non-functional type II toxin-antitoxin (TA system). Does not neutralize the effect of any of the RelE or ParE toxins. This is Orphan antitoxin ParD2 (parD2) from Caulobacter vibrioides (strain ATCC 19089 / CIP 103742 / CB 15) (Caulobacter crescentus).